Reading from the N-terminus, the 788-residue chain is Endonuclease MutS2 (788 aa).

332–339 (GPNTGGKT) is a binding site for ATP. The 76-residue stretch at 713 to 788 (VDLRGMDAEE…GTGVTVVELK (76 aa)) folds into the Smr domain.

The protein belongs to the DNA mismatch repair MutS family. MutS2 subfamily. Homodimer. Binds to stalled ribosomes, contacting rRNA.

Endonuclease that is involved in the suppression of homologous recombination and thus may have a key role in the control of bacterial genetic diversity. Its function is as follows. Acts as a ribosome collision sensor, splitting the ribosome into its 2 subunits. Detects stalled/collided 70S ribosomes which it binds and splits by an ATP-hydrolysis driven conformational change. Acts upstream of the ribosome quality control system (RQC), a ribosome-associated complex that mediates the extraction of incompletely synthesized nascent chains from stalled ribosomes and their subsequent degradation. Probably generates substrates for RQC. The sequence is that of Endonuclease MutS2 from Clostridium botulinum (strain Langeland / NCTC 10281 / Type F).